We begin with the raw amino-acid sequence, 190 residues long: Vascular endothelial growth factor A (190 aa).

An N-terminal signal peptide occupies residues 1–26 (MNFLLSWVHWTLALLLYLHHAKWSQA). 3 disulfides stabilise this stretch: cysteine 51–cysteine 93, cysteine 82–cysteine 127, and cysteine 86–cysteine 129. Asparagine 100 carries N-linked (GlcNAc...) asparagine glycosylation.

It belongs to the PDGF/VEGF growth factor family. As to quaternary structure, homodimer; disulfide-linked. Also found as heterodimer with PGF. Interacts with NRP1. Interacts with isoform 2 of BSG. Interacts with CD82; this interaction inhibits VEGFA-mediated signaling pathway.

It is found in the secreted. Functionally, growth factor active in angiogenesis, vasculogenesis and endothelial cell growth. Induces endothelial cell proliferation, promotes cell migration, inhibits apoptosis and induces permeabilization of blood vessels. Binds to the FLT1/VEGFR1 and KDR/VEGFR2 receptors, heparan sulfate and heparin. Binding to NRP1 receptor initiates a signaling pathway needed for motor neuron axon guidance and cell body migration, including for the caudal migration of facial motor neurons from rhombomere 4 to rhombomere 6 during embryonic development. Also binds the DEAR/FBXW7-AS1 receptor. The chain is Vascular endothelial growth factor A (VEGFA) from Mesocricetus auratus (Golden hamster).